Reading from the N-terminus, the 612-residue chain is Threonine--tRNA ligase (612 aa).

The segment at 218 to 509 is catalytic; sequence DHRKLGVELG…LSEHFWGNFP (292 aa). Zn(2+)-binding residues include Cys310, His361, and His486.

It belongs to the class-II aminoacyl-tRNA synthetase family. Homodimer. It depends on Zn(2+) as a cofactor.

The protein resides in the cytoplasm. The enzyme catalyses tRNA(Thr) + L-threonine + ATP = L-threonyl-tRNA(Thr) + AMP + diphosphate + H(+). Functionally, catalyzes the attachment of threonine to tRNA(Thr) in a two-step reaction: L-threonine is first activated by ATP to form Thr-AMP and then transferred to the acceptor end of tRNA(Thr). Also edits incorrectly charged L-seryl-tRNA(Thr). The polypeptide is Threonine--tRNA ligase (Helicobacter acinonychis (strain Sheeba)).